Here is a 232-residue protein sequence, read N- to C-terminus: Ion-translocating oxidoreductase complex subunit E (232 aa).

6 helical membrane passes run 18–38 (GLVQLLGLCPLLAVTATLTNA), 39–59 (LGLGVATMLVLIGSNILVSLV), 69–89 (IPVFVMIIAALVTAVQLLINA), 93–113 (GLYLSLGIFLPLIVTNCIIIG), 127–147 (AAFDGLMMGLGFTLVLAVLGA), and 182–202 (PFLLAMLPPGAFIVMGLLIAL).

Belongs to the NqrDE/RnfAE family. As to quaternary structure, the complex is composed of six subunits: RnfA, RnfB, RnfC, RnfD, RnfE and RnfG.

The protein localises to the cell inner membrane. In terms of biological role, part of a membrane-bound complex that couples electron transfer with translocation of ions across the membrane. This chain is Ion-translocating oxidoreductase complex subunit E, found in Shewanella sp. (strain MR-4).